The primary structure comprises 276 residues: Ribosomal RNA small subunit methyltransferase A (276 aa).

Residues His15, Leu17, Gly42, Glu64, Asp89, and Asn108 each coordinate S-adenosyl-L-methionine.

This sequence belongs to the class I-like SAM-binding methyltransferase superfamily. rRNA adenine N(6)-methyltransferase family. RsmA subfamily.

It is found in the cytoplasm. It carries out the reaction adenosine(1518)/adenosine(1519) in 16S rRNA + 4 S-adenosyl-L-methionine = N(6)-dimethyladenosine(1518)/N(6)-dimethyladenosine(1519) in 16S rRNA + 4 S-adenosyl-L-homocysteine + 4 H(+). Specifically dimethylates two adjacent adenosines (A1518 and A1519) in the loop of a conserved hairpin near the 3'-end of 16S rRNA in the 30S particle. May play a critical role in biogenesis of 30S subunits. The protein is Ribosomal RNA small subunit methyltransferase A of Prochlorococcus marinus (strain MIT 9312).